The chain runs to 287 residues: Bifunctional protein FolD (287 aa).

Residues glycine 171–serine 173, isoleucine 196, and isoleucine 237 each bind NADP(+).

The protein belongs to the tetrahydrofolate dehydrogenase/cyclohydrolase family. In terms of assembly, homodimer.

It catalyses the reaction (6R)-5,10-methylene-5,6,7,8-tetrahydrofolate + NADP(+) = (6R)-5,10-methenyltetrahydrofolate + NADPH. The enzyme catalyses (6R)-5,10-methenyltetrahydrofolate + H2O = (6R)-10-formyltetrahydrofolate + H(+). It functions in the pathway one-carbon metabolism; tetrahydrofolate interconversion. In terms of biological role, catalyzes the oxidation of 5,10-methylenetetrahydrofolate to 5,10-methenyltetrahydrofolate and then the hydrolysis of 5,10-methenyltetrahydrofolate to 10-formyltetrahydrofolate. The chain is Bifunctional protein FolD from Methanosarcina mazei (strain ATCC BAA-159 / DSM 3647 / Goe1 / Go1 / JCM 11833 / OCM 88) (Methanosarcina frisia).